The sequence spans 137 residues: Small ribosomal subunit protein eS19 (137 aa).

This sequence belongs to the eukaryotic ribosomal protein eS19 family. As to quaternary structure, component of the small ribosomal subunit.

It is found in the cytoplasm. The protein is Small ribosomal subunit protein eS19 (RPS19) of Encephalitozoon cuniculi (strain GB-M1) (Microsporidian parasite).